We begin with the raw amino-acid sequence, 412 residues long: uncharacterized protein (412 aa).

[4Fe-4S] cluster contacts are provided by Cys-62, Cys-68, Cys-71, and Cys-143. Positions 243, 270, 290, and 338 each coordinate S-adenosyl-L-methionine. Cys-364 serves as the catalytic Nucleophile.

This sequence belongs to the class I-like SAM-binding methyltransferase superfamily. RNA M5U methyltransferase family.

This is an uncharacterized protein from Mesorhizobium japonicum (strain LMG 29417 / CECT 9101 / MAFF 303099) (Mesorhizobium loti (strain MAFF 303099)).